The sequence spans 570 residues: GTPase Obg (570 aa).

The Obg domain occupies 2–168 (SDFVDRVTVH…RDIILELKSI (167 aa)). The segment at 15–43 (GDGGNGSAGIRREKYKPLAGPNGGNGGKG) is disordered. Positions 169–349 (ADVALVGFPS…LNFALAKLVK (181 aa)) constitute an OBG-type G domain. GTP is bound by residues 175–182 (GFPSAGKS), 200–204 (FTTLV), 221–224 (DVPG), 301–304 (NKID), and 330–332 (STA). Residues Ser182 and Thr202 each coordinate Mg(2+). The 87-residue stretch at 382-468 (GRNAQVREFE…ERAVAFDWDP (87 aa)) folds into the OCT domain. Residues 521 to 570 (RAAMQAERAAGHWADPSIDDDRHDEQSLFGRGEVEEYEDEPGADGSRQLD) are disordered.

It belongs to the TRAFAC class OBG-HflX-like GTPase superfamily. OBG GTPase family. Monomer. Requires Mg(2+) as cofactor.

It localises to the cytoplasm. Its function is as follows. An essential GTPase which binds GTP, GDP and possibly (p)ppGpp with moderate affinity, with high nucleotide exchange rates and a fairly low GTP hydrolysis rate. Plays a role in control of the cell cycle, stress response, ribosome biogenesis and in those bacteria that undergo differentiation, in morphogenesis control. The sequence is that of GTPase Obg from Bifidobacterium animalis subsp. lactis (strain AD011).